We begin with the raw amino-acid sequence, 544 residues long: Chaperonin GroEL (544 aa).

ATP contacts are provided by residues 30 to 33 (TLGP), Lys-51, 87 to 91 (DGTTT), Gly-415, and Asp-495.

The protein belongs to the chaperonin (HSP60) family. Forms a cylinder of 14 subunits composed of two heptameric rings stacked back-to-back. Interacts with the co-chaperonin GroES.

The protein resides in the cytoplasm. It catalyses the reaction ATP + H2O + a folded polypeptide = ADP + phosphate + an unfolded polypeptide.. Together with its co-chaperonin GroES, plays an essential role in assisting protein folding. The GroEL-GroES system forms a nano-cage that allows encapsulation of the non-native substrate proteins and provides a physical environment optimized to promote and accelerate protein folding. The chain is Chaperonin GroEL from Neisseria meningitidis serogroup C (strain 053442).